Consider the following 93-residue polypeptide: Small ribosomal subunit protein uS19 (93 aa).

It belongs to the universal ribosomal protein uS19 family.

Protein S19 forms a complex with S13 that binds strongly to the 16S ribosomal RNA. In Mycobacterium marinum (strain ATCC BAA-535 / M), this protein is Small ribosomal subunit protein uS19.